Here is a 414-residue protein sequence, read N- to C-terminus: MTSNGSQPQASTPMVSAEEPAAAASVPNSTPMVSAEGPAAAVSAPNSSVVSSAPASAPTASEPVISQVQSLAPIVSGFDPNLHGRLTNEQMRQAQNEAAMQGYEEGSRRNPRLPSSTTAHNDYASMNSNPFETGTAYGGAPRVSFGSYPTFPGSGSASEPNSQRIFPQQHGVNPPAHASDLVPHQATSGGNTGTPFTLGNRAPRNATANTGGMRRRLDSVGLKNIRYEPQAGVVASNQKIRAVGVALIGMGIPEHQLTEVGVYLARHCADVGASDKSALLGTFPGSDITLEEVGTMIKQTEGCTLRQYCAFYAKHVWNLMLQTQSPPANWVGKEFKFETRYAAFDFFFGVESTASLEPADGLIRLPTQAERVANATSKEIQMYRIRSMEGTQAVNFGEVTGGKIGPKPVLSIRK.

Residues 1-14 are compositionally biased toward polar residues; it reads MTSNGSQPQASTPM. Disordered regions lie at residues 1–60, 94–127, and 148–212; these read MTSN…APTA, AQNE…ASMN, and YPTF…NTGG. Composition is skewed to low complexity over residues 15–27 and 38–60; these read VSAE…ASVP and PAAA…APTA. 3 stretches are compositionally biased toward polar residues: residues 113–127, 153–166, and 185–197; these read LPSS…ASMN, GSGS…QRIF, and QATS…TPFT.

The protein resides in the virion. The sequence is that of Capsid protein from Crataegus (hawthorn).